The following is a 188-amino-acid chain: Threonylcarbamoyl-AMP synthase (188 aa).

One can recognise a YrdC-like domain in the interval 3–188 (QLHPSDIKDI…RSGKILRNGQ (186 aa)).

This sequence belongs to the SUA5 family. TsaC subfamily.

The protein localises to the cytoplasm. The enzyme catalyses L-threonine + hydrogencarbonate + ATP = L-threonylcarbamoyladenylate + diphosphate + H2O. Functionally, required for the formation of a threonylcarbamoyl group on adenosine at position 37 (t(6)A37) in tRNAs that read codons beginning with adenine. Catalyzes the conversion of L-threonine, HCO(3)(-)/CO(2) and ATP to give threonylcarbamoyl-AMP (TC-AMP) as the acyladenylate intermediate, with the release of diphosphate. The chain is Threonylcarbamoyl-AMP synthase from Shewanella baltica (strain OS155 / ATCC BAA-1091).